The chain runs to 726 residues: Biotin--protein ligase (726 aa).

Residues 28 to 98 (EVKDQVSNKQ…SDRGGGPVEH (71 aa)) are disordered. Residues 43-75 (PKPEPSLEIKPEQDGMEHVGRDDPKALGEEPKQ) show a composition bias toward basic and acidic residues. A phosphoserine mark is found at Ser-147 and Ser-299. Residues 463–652 (KQLGKVILFA…VLEKLIKEFQ (190 aa)) form the BPL/LPL catalytic domain.

Belongs to the biotin--protein ligase family. In terms of assembly, monomer. In terms of tissue distribution, widely expressed. Mostly expressed in muscle, placenta and to a lower extent in the brain, kidney, pancreas, liver and lung.

It localises to the cytoplasm. The protein localises to the mitochondrion. The enzyme catalyses apo-[methylmalonyl-CoA:pyruvate carboxytransferase] + biotin + ATP = holo-[methylmalonyl-CoA:pyruvate carboxytransferase] + AMP + diphosphate + H(+). The catalysed reaction is apo-[propionyl-CoA:carbon-dioxide ligase (ADP-forming)] + biotin + ATP = holo-[propionyl-CoA:carbon-dioxide ligase (ADP-forming)] + AMP + diphosphate + H(+). It carries out the reaction apo-[3-methylcrotonoyl-CoA:carbon-dioxide ligase (ADP-forming)] + biotin + ATP = holo-[3-methylcrotonoyl-CoA:carbon-dioxide ligase (ADP-forming)] + AMP + diphosphate + H(+). It catalyses the reaction biotin + L-lysyl-[protein] + ATP = N(6)-biotinyl-L-lysyl-[protein] + AMP + diphosphate + H(+). Biotin--protein ligase catalyzing the biotinylation of the 4 biotin-dependent carboxylases acetyl-CoA-carboxylase, pyruvate carboxylase, propionyl-CoA carboxylase, and methylcrotonyl-CoA carboxylase. The chain is Biotin--protein ligase from Homo sapiens (Human).